A 147-amino-acid polypeptide reads, in one-letter code: Hemoglobin subunit beta (147 aa).

An N-acetylvaline modification is found at Val2. The Globin domain occupies 3-147 (HLSAEEKEAV…VANALAHKYH (145 aa)). Ser45 is subject to Phosphoserine. At Lys60 the chain carries N6-acetyllysine. His64 contacts heme b. At Lys83 the chain carries N6-acetyllysine. His93 lines the heme b pocket. Cys94 is subject to S-nitrosocysteine. The residue at position 145 (Lys145) is an N6-acetyllysine.

It belongs to the globin family. Heterotetramer of two alpha chains and two beta chains. In terms of tissue distribution, red blood cells.

Its function is as follows. Involved in oxygen transport from the lung to the various peripheral tissues. In Sus scrofa (Pig), this protein is Hemoglobin subunit beta (HBB).